The sequence spans 339 residues: MNTRFLDACWGKPVDTVPVWLMRQAGRYLPDYMRVRSKCTFLELCKTPELATEVTVQPVDILGVDAAILFSDILTPIEPMGMELDFTPGPVFAKPIRTMADVEALKIPKMETDVPYVLDAVKLLRKELATKVPLIGFGGAPFTLACYMVEGKGSKDFAALKKMMYADPEVYAALMDKITTMDMEYLNAQIKAGAQAIQIFDTWGGMLSPADYERYVLPYTQRLINGLDRTNIPVIHFVKGAGTMLEIVKQAGGDVMGLDWHVNLGKARDILGDMAVQGNLDPTVLFAPNEIIEREVKRVLDENAGRPGLIFNLGHGILPTVPPEKAIFMVDCVHRLSRK.

Substrate is bound by residues arginine 23–arginine 27, aspartate 72, tyrosine 147, threonine 202, and histidine 315.

This sequence belongs to the uroporphyrinogen decarboxylase family. As to quaternary structure, homodimer.

It is found in the cytoplasm. The enzyme catalyses uroporphyrinogen III + 4 H(+) = coproporphyrinogen III + 4 CO2. It functions in the pathway porphyrin-containing compound metabolism; protoporphyrin-IX biosynthesis; coproporphyrinogen-III from 5-aminolevulinate: step 4/4. In terms of biological role, catalyzes the decarboxylation of four acetate groups of uroporphyrinogen-III to yield coproporphyrinogen-III. This is Uroporphyrinogen decarboxylase from Citrifermentans bemidjiense (strain ATCC BAA-1014 / DSM 16622 / JCM 12645 / Bem) (Geobacter bemidjiensis).